The chain runs to 194 residues: Large ribosomal subunit protein bL25 (194 aa).

The protein belongs to the bacterial ribosomal protein bL25 family. CTC subfamily. As to quaternary structure, part of the 50S ribosomal subunit; part of the 5S rRNA/L5/L18/L25 subcomplex. Contacts the 5S rRNA. Binds to the 5S rRNA independently of L5 and L18.

Its function is as follows. This is one of the proteins that binds to the 5S RNA in the ribosome where it forms part of the central protuberance. The protein is Large ribosomal subunit protein bL25 of Neorickettsia sennetsu (strain ATCC VR-367 / Miyayama) (Ehrlichia sennetsu).